The primary structure comprises 406 residues: Phosphopentomutase (406 aa).

Positions 10, 305, 310, 346, 347, and 358 each coordinate Mn(2+).

It belongs to the phosphopentomutase family. It depends on Mn(2+) as a cofactor.

It is found in the cytoplasm. It carries out the reaction 2-deoxy-alpha-D-ribose 1-phosphate = 2-deoxy-D-ribose 5-phosphate. The catalysed reaction is alpha-D-ribose 1-phosphate = D-ribose 5-phosphate. Its pathway is carbohydrate degradation; 2-deoxy-D-ribose 1-phosphate degradation; D-glyceraldehyde 3-phosphate and acetaldehyde from 2-deoxy-alpha-D-ribose 1-phosphate: step 1/2. In terms of biological role, isomerase that catalyzes the conversion of deoxy-ribose 1-phosphate (dRib-1-P) and ribose 1-phosphate (Rib-1-P) to deoxy-ribose 5-phosphate (dRib-5-P) and ribose 5-phosphate (Rib-5-P), respectively. The sequence is that of Phosphopentomutase from Vibrio cholerae serotype O1 (strain ATCC 39541 / Classical Ogawa 395 / O395).